Here is a 72-residue protein sequence, read N- to C-terminus: UPF0154 protein Bcer98_2334 (72 aa).

The helical transmembrane segment at 3–23 (IWSGILVGVVALLAGVALGFF) threads the bilayer.

This sequence belongs to the UPF0154 family.

It is found in the cell membrane. In Bacillus cytotoxicus (strain DSM 22905 / CIP 110041 / 391-98 / NVH 391-98), this protein is UPF0154 protein Bcer98_2334.